Consider the following 200-residue polypeptide: dTTP/UTP pyrophosphatase (200 aa).

Asp-72 serves as the catalytic Proton acceptor.

Belongs to the Maf family. YhdE subfamily. It depends on a divalent metal cation as a cofactor.

The protein localises to the cytoplasm. The enzyme catalyses dTTP + H2O = dTMP + diphosphate + H(+). It catalyses the reaction UTP + H2O = UMP + diphosphate + H(+). In terms of biological role, nucleoside triphosphate pyrophosphatase that hydrolyzes dTTP and UTP. May have a dual role in cell division arrest and in preventing the incorporation of modified nucleotides into cellular nucleic acids. The polypeptide is dTTP/UTP pyrophosphatase (Pseudomonas syringae pv. syringae (strain B728a)).